The primary structure comprises 432 residues: MTSAKTASAPDSFFTASLDQADPEIAAAIKGELGRQRHEVELIASENIVSRAVLEAQGSVMTNKYAEGYPGARYYGGCEWVDVAENLAIDRAKKLFGAGFANVQPNSGSQMNQAVFLALLQPGDTFMGLDLAAGGHLTHGSPVNMSGKWFKAAHYTVRREDQIIDMDAVQKQAEEIKPKLIVAGGSAYSRAWDFKRFREIADSVGAYLLVDMAHFAGLVAGGVHASPVPYAHVTTTTTHKSLRGPRGGLILSNDETLAKKLNSAIFPGLQGGPLMHVIAAKAVAFGEALRPDFKVYAKNVVENAKALAEAMKSHGFDIVSGGTDNHLMLVDLRPKGLKGNVSEKALVRAAITCNKNGIPFDPEKPFVTSGLRLGTPAATTRGFGVAEFQQVGGMIAEVLNAIAQSDDGKAPLVEAAIKERVKALTDRFPIYQ.

(6S)-5,6,7,8-tetrahydrofolate is bound by residues Leu131 and 135–137; that span reads GHL. Lys240 carries the post-translational modification N6-(pyridoxal phosphate)lysine.

The protein belongs to the SHMT family. Homodimer. Requires pyridoxal 5'-phosphate as cofactor.

The protein resides in the cytoplasm. The catalysed reaction is (6R)-5,10-methylene-5,6,7,8-tetrahydrofolate + glycine + H2O = (6S)-5,6,7,8-tetrahydrofolate + L-serine. It functions in the pathway one-carbon metabolism; tetrahydrofolate interconversion. The protein operates within amino-acid biosynthesis; glycine biosynthesis; glycine from L-serine: step 1/1. In terms of biological role, catalyzes the reversible interconversion of serine and glycine with tetrahydrofolate (THF) serving as the one-carbon carrier. This reaction serves as the major source of one-carbon groups required for the biosynthesis of purines, thymidylate, methionine, and other important biomolecules. Also exhibits THF-independent aldolase activity toward beta-hydroxyamino acids, producing glycine and aldehydes, via a retro-aldol mechanism. The polypeptide is Serine hydroxymethyltransferase (Bradyrhizobium diazoefficiens (strain JCM 10833 / BCRC 13528 / IAM 13628 / NBRC 14792 / USDA 110)).